A 432-amino-acid polypeptide reads, in one-letter code: NADH-quinone oxidoreductase subunit D (432 aa).

It belongs to the complex I 49 kDa subunit family. NDH-1 is composed of 14 different subunits. Subunits NuoB, C, D, E, F, and G constitute the peripheral sector of the complex.

Its subcellular location is the cell membrane. It carries out the reaction a quinone + NADH + 5 H(+)(in) = a quinol + NAD(+) + 4 H(+)(out). In terms of biological role, NDH-1 shuttles electrons from NADH, via FMN and iron-sulfur (Fe-S) centers, to quinones in the respiratory chain. The immediate electron acceptor for the enzyme in this species is believed to be a menaquinone. Couples the redox reaction to proton translocation (for every two electrons transferred, four hydrogen ions are translocated across the cytoplasmic membrane), and thus conserves the redox energy in a proton gradient. In Mycobacterium marinum (strain ATCC BAA-535 / M), this protein is NADH-quinone oxidoreductase subunit D.